The following is a 240-amino-acid chain: Hairy and enhancer of split-related protein HELT (240 aa).

The bHLH domain maps to Arg10–Leu65. Lys48 is modified (N6-acetyllysine). An Orange domain is found at Phe86–Leu121.

This sequence belongs to the HEY family. As to quaternary structure, self-associates. Interacts with HES5 and HEY2. As to expression, expressed in heart and testis.

The protein localises to the nucleus. In terms of biological role, transcriptional repressor which binds preferentially to the canonical E box sequence 5'-CACGCG-3'. Required for the development of GABAergic neurons. This is Hairy and enhancer of split-related protein HELT (Helt) from Mus musculus (Mouse).